The primary structure comprises 292 residues: Shikimate dehydrogenase (NADP(+)) (292 aa).

Residues 22–24 (SLS) and S69 contribute to the shikimate site. K73 functions as the Proton acceptor in the catalytic mechanism. Residues N94 and D111 each coordinate shikimate. NADP(+)-binding positions include 135 to 139 (GVGGA) and I236. Y238 lines the shikimate pocket. G260 contributes to the NADP(+) binding site.

The protein belongs to the shikimate dehydrogenase family. As to quaternary structure, homodimer.

It catalyses the reaction shikimate + NADP(+) = 3-dehydroshikimate + NADPH + H(+). It functions in the pathway metabolic intermediate biosynthesis; chorismate biosynthesis; chorismate from D-erythrose 4-phosphate and phosphoenolpyruvate: step 4/7. In terms of biological role, involved in the biosynthesis of the chorismate, which leads to the biosynthesis of aromatic amino acids. Catalyzes the reversible NADPH linked reduction of 3-dehydroshikimate (DHSA) to yield shikimate (SA). This chain is Shikimate dehydrogenase (NADP(+)), found in Streptococcus pyogenes serotype M3 (strain ATCC BAA-595 / MGAS315).